A 161-amino-acid polypeptide reads, in one-letter code: Cytochrome c-type biogenesis protein CcmE (161 aa).

Residues 1-13 (MSWLPKSPKARRR) lie on the Cytoplasmic side of the membrane. The chain crosses the membrane as a helical; Signal-anchor for type II membrane protein span at residues 14–34 (LMLVAAIAPVLAVAAGLTLWG). Residues 35–161 (LSDSISFFYT…QRPEHQGDAL (127 aa)) are Periplasmic-facing. Positions 128 and 132 each coordinate heme.

It belongs to the CcmE/CycJ family.

It localises to the cell inner membrane. Heme chaperone required for the biogenesis of c-type cytochromes. Transiently binds heme delivered by CcmC and transfers the heme to apo-cytochromes in a process facilitated by CcmF and CcmH. This Phenylobacterium zucineum (strain HLK1) protein is Cytochrome c-type biogenesis protein CcmE.